The sequence spans 505 residues: Trans-cinnamate 4-monooxygenase (505 aa).

The helical transmembrane segment at 3 to 23 threads the bilayer; it reads LLLLEKTLLGSFVAILVAILV. (E)-cinnamate-binding positions include 213–218 and A306; that span reads RSRLAQ. C447 is a heme binding site.

This sequence belongs to the cytochrome P450 family. It depends on heme as a cofactor.

The protein localises to the membrane. It catalyses the reaction (E)-cinnamate + reduced [NADPH--hemoprotein reductase] + O2 = (E)-4-coumarate + oxidized [NADPH--hemoprotein reductase] + H2O + H(+). The protein operates within phenylpropanoid metabolism; trans-4-coumarate biosynthesis; trans-4-coumarate from trans-cinnamate: step 1/1. Catalyzes the first oxidative step of the phenylpropanoid pathway in higher plants by transforming trans-cinnamate into p-coumarate. The compounds formed by this pathway are essential components for lignification, pollination, and defense against ultraviolet light, predators and pathogens. The sequence is that of Trans-cinnamate 4-monooxygenase (CYP73A13) from Populus tremuloides (Quaking aspen).